A 352-amino-acid polypeptide reads, in one-letter code: Protein TIFY 6B (352 aa).

Positions 1–71 (MERDFLGLGS…KSGNYHLPHS (71 aa)) are disordered. Positions 17 to 26 (VKEETSESSR) are enriched in basic and acidic residues. Residues 34-54 (MNWSFSNKVSASSSQFLSFRP) are compositionally biased toward polar residues. The region spanning 172-207 (PIGSPAQLTIFYAGSVCVYDDISPEKAKAIMLLAGN) is the Tify domain. The Jas signature appears at 302–326 (PLARKASLARFLEKRKERVTSVSPY). Positions 304–311 (ARKASLAR) match the Nuclear localization signal motif.

Belongs to the TIFY/JAZ family. In terms of assembly, homo- and heterodimer. Interacts with COI1, MYC2, MYC3, MYC4, TIFY10A/JAZ1, TIFY10B/JAZ2, TIFY6A/JAZ4, TIFY5A/JAZ8, TIFY7/JAZ9, TIFY9/JAZ10 and TIFY3A/JAZ11. Interacts (via TIFY domain) with AFPH2/NINJA. In terms of processing, ubiquitinated. Targeted for degradation by the SCF(COI1) E3 ubiquitin ligase-proteasome pathway during jasmonate signaling. As to expression, srtongly expressed in root tips.

The protein localises to the nucleus. In terms of biological role, repressor of jasmonate responses. Jasmonoyl-isoleucine (JA-Ile) specifically promotes COI1-TIFY6B/JAZ3 interaction. Acts as a negative regulator of MYC2 function. Feed-back regulated by MYC2. This chain is Protein TIFY 6B (TIFY6B), found in Arabidopsis thaliana (Mouse-ear cress).